The chain runs to 254 residues: 4-hydroxy-tetrahydrodipicolinate reductase (254 aa).

Residue 7-12 (GASGRI) coordinates NAD(+). Arginine 35 contributes to the NADP(+) binding site. NAD(+)-binding positions include 91–93 (GTT) and 115–118 (AHNM). Histidine 147 acts as the Proton donor/acceptor in catalysis. (S)-2,3,4,5-tetrahydrodipicolinate is bound at residue histidine 148. Residue lysine 151 is the Proton donor of the active site. Residue 157 to 158 (GT) participates in (S)-2,3,4,5-tetrahydrodipicolinate binding.

This sequence belongs to the DapB family.

It is found in the cytoplasm. The catalysed reaction is (S)-2,3,4,5-tetrahydrodipicolinate + NAD(+) + H2O = (2S,4S)-4-hydroxy-2,3,4,5-tetrahydrodipicolinate + NADH + H(+). The enzyme catalyses (S)-2,3,4,5-tetrahydrodipicolinate + NADP(+) + H2O = (2S,4S)-4-hydroxy-2,3,4,5-tetrahydrodipicolinate + NADPH + H(+). It functions in the pathway amino-acid biosynthesis; L-lysine biosynthesis via DAP pathway; (S)-tetrahydrodipicolinate from L-aspartate: step 4/4. Functionally, catalyzes the conversion of 4-hydroxy-tetrahydrodipicolinate (HTPA) to tetrahydrodipicolinate. The polypeptide is 4-hydroxy-tetrahydrodipicolinate reductase (Helicobacter pylori (strain P12)).